The following is a 150-amino-acid chain: Large ribosomal subunit protein uL16 (150 aa).

It belongs to the universal ribosomal protein uL16 family. As to quaternary structure, component of the small ribosomal subunit. Mature ribosomes consist of a small (40S) and a large (60S) subunit. The 40S subunit contains about 33 different proteins and 1 molecule of RNA (18S). The 60S subunit contains about 49 different proteins and 3 molecules of RNA (25S, 5.8S and 5S).

The polypeptide is Large ribosomal subunit protein uL16 (RPL10) (Nicotiana tabacum (Common tobacco)).